The sequence spans 144 residues: Large ribosomal subunit protein uL13 (144 aa).

This sequence belongs to the universal ribosomal protein uL13 family. As to quaternary structure, part of the 50S ribosomal subunit.

Its function is as follows. This protein is one of the early assembly proteins of the 50S ribosomal subunit, although it is not seen to bind rRNA by itself. It is important during the early stages of 50S assembly. The polypeptide is Large ribosomal subunit protein uL13 (Chloroflexus aurantiacus (strain ATCC 29366 / DSM 635 / J-10-fl)).